Consider the following 331-residue polypeptide: Ketol-acid reductoisomerase (NADP(+)) (331 aa).

Residues 2-182 (AKLFYDSDAD…GGTRAGILET (181 aa)) form the KARI N-terminal Rossmann domain. NADP(+) is bound by residues 25–28 (YGSQ), S51, S53, and 83–86 (DEFQ). H108 is a catalytic residue. Residue G134 coordinates NADP(+). The 146-residue stretch at 183–328 (NFKEETETDL…KTLRSMFSWL (146 aa)) folds into the KARI C-terminal knotted domain. Residues D191, E195, E227, and E231 each contribute to the Mg(2+) site. Residue S252 coordinates substrate.

This sequence belongs to the ketol-acid reductoisomerase family. Requires Mg(2+) as cofactor.

It carries out the reaction (2R)-2,3-dihydroxy-3-methylbutanoate + NADP(+) = (2S)-2-acetolactate + NADPH + H(+). It catalyses the reaction (2R,3R)-2,3-dihydroxy-3-methylpentanoate + NADP(+) = (S)-2-ethyl-2-hydroxy-3-oxobutanoate + NADPH + H(+). Its pathway is amino-acid biosynthesis; L-isoleucine biosynthesis; L-isoleucine from 2-oxobutanoate: step 2/4. It participates in amino-acid biosynthesis; L-valine biosynthesis; L-valine from pyruvate: step 2/4. Its function is as follows. Involved in the biosynthesis of branched-chain amino acids (BCAA). Catalyzes an alkyl-migration followed by a ketol-acid reduction of (S)-2-acetolactate (S2AL) to yield (R)-2,3-dihydroxy-isovalerate. In the isomerase reaction, S2AL is rearranged via a Mg-dependent methyl migration to produce 3-hydroxy-3-methyl-2-ketobutyrate (HMKB). In the reductase reaction, this 2-ketoacid undergoes a metal-dependent reduction by NADPH to yield (R)-2,3-dihydroxy-isovalerate. This Prochlorococcus marinus (strain NATL2A) protein is Ketol-acid reductoisomerase (NADP(+)).